Consider the following 1002-residue polypeptide: ToxR-activated gene A lipoprotein (1002 aa).

Residues 1–21 form the signal peptide; that stretch reads MVVRYSLLMKVSFAILIFLVG. Residue C22 is the site of N-palmitoyl cysteine attachment. The S-diacylglycerol cysteine moiety is linked to residue C22. Positions 31-53 are disordered; it reads DQYLTDPDISEQTKKPSRPIIDE. In terms of domain architecture, Fibronectin type-III spans 45–139; the sequence is KPSRPIIDEK…KIEFITLNEI (95 aa). Residues 282-536 form the Peptidase M66 domain; it reads ELIIQNIDLG…QDWLKNGAVV (255 aa). Residue H432 participates in Zn(2+) binding. The active site involves E433. H436 and H442 together coordinate Zn(2+).

Zn(2+) serves as cofactor.

Its subcellular location is the cell membrane. This Vibrio cholerae serotype O1 (strain ATCC 39315 / El Tor Inaba N16961) protein is ToxR-activated gene A lipoprotein (tagA).